A 247-amino-acid chain; its full sequence is 3-deoxy-manno-octulosonate cytidylyltransferase (247 aa).

Belongs to the KdsB family.

It localises to the cytoplasm. The catalysed reaction is 3-deoxy-alpha-D-manno-oct-2-ulosonate + CTP = CMP-3-deoxy-beta-D-manno-octulosonate + diphosphate. It participates in nucleotide-sugar biosynthesis; CMP-3-deoxy-D-manno-octulosonate biosynthesis; CMP-3-deoxy-D-manno-octulosonate from 3-deoxy-D-manno-octulosonate and CTP: step 1/1. The protein operates within bacterial outer membrane biogenesis; lipopolysaccharide biosynthesis. Its function is as follows. Activates KDO (a required 8-carbon sugar) for incorporation into bacterial lipopolysaccharide in Gram-negative bacteria. The polypeptide is 3-deoxy-manno-octulosonate cytidylyltransferase (Rhodopseudomonas palustris (strain BisA53)).